Consider the following 267-residue polypeptide: MERDFLGLSDKQYLSNNVKHEVNDDAVEERGLSTKAAREWGKSKVFATSSFMPSSDFQEAKAFPGAYQWGSVSAANVFRRCQFGGAFQNATPLLLGGSVPLPTHPSLVPRVASSGSSPQLTIFYGGTISVFNDISPDKAQAIMLCAGNGLKGETGDSKPVREAERMYGKQIHNTAATSSSSATHTDNFSRCRDTPVAATNAMSMIESFNAAPRNMIPSVPQARKASLARFLEKRKERLMSAMPYKKMLLDLSTGESSGMNYSSTSPT.

The 36-residue stretch at 113–148 (SSGSSPQLTIFYGGTISVFNDISPDKAQAIMLCAGN) folds into the Tify domain. The Jas signature appears at 220–244 (PQARKASLARFLEKRKERLMSAMPY). The Nuclear localization signal motif lies at 222 to 229 (ARKASLAR).

Belongs to the TIFY/JAZ family. As to quaternary structure, homo- and heterodimer. Interacts with MYC2, MYC3, MYC4, COI1, AFPH2/NINJA, TIFY10A/JAZ1, TIFY10B/JAZ2, TIFY6B/JAZ3, TIFY5A/JAZ8, TIFY9/JAZ10 and TIFY3A/JAZ11. Interacts with RHD6 and RSL1. Post-translationally, ubiquitinated. Targeted for degradation by the SCF(COI1) E3 ubiquitin ligase-proteasome pathway during jasmonate signaling.

It localises to the nucleus. In terms of biological role, repressor of jasmonate responses. Jasmonoyl-isoleucine (JA-Ile) specifically promotes COI1-TIFY7/JAZ9 interaction. Interacts with and suppresses RHD6 and RSL1 transcription factor activities to negatively regulate jasmonate-stimulated root hair development. The chain is Protein TIFY 7 (TIFY7) from Arabidopsis thaliana (Mouse-ear cress).